The sequence spans 296 residues: Light-independent protochlorophyllide reductase iron-sulfur ATP-binding protein (296 aa).

ATP-binding positions include 39-44 and K68; that span reads GIGKST. S43 contacts Mg(2+). [4Fe-4S] cluster-binding residues include C124 and C158. An ATP-binding site is contributed by 209–210; the sequence is NR.

It belongs to the NifH/BchL/ChlL family. In terms of assembly, homodimer. Protochlorophyllide reductase is composed of three subunits; ChlL, ChlN and ChlB. It depends on [4Fe-4S] cluster as a cofactor.

It catalyses the reaction chlorophyllide a + oxidized 2[4Fe-4S]-[ferredoxin] + 2 ADP + 2 phosphate = protochlorophyllide a + reduced 2[4Fe-4S]-[ferredoxin] + 2 ATP + 2 H2O. Its pathway is porphyrin-containing compound metabolism; chlorophyll biosynthesis (light-independent). In terms of biological role, component of the dark-operative protochlorophyllide reductase (DPOR) that uses Mg-ATP and reduced ferredoxin to reduce ring D of protochlorophyllide (Pchlide) to form chlorophyllide a (Chlide). This reaction is light-independent. The L component serves as a unique electron donor to the NB-component of the complex, and binds Mg-ATP. The polypeptide is Light-independent protochlorophyllide reductase iron-sulfur ATP-binding protein (Synechococcus sp. (strain WH7803)).